The chain runs to 230 residues: Triosephosphate isomerase (230 aa).

9 to 11 (NYK) lines the substrate pocket. The active-site Electrophile is the histidine 93. The Proton acceptor role is filled by glutamate 141. Substrate-binding positions include isoleucine 146, glycine 180, and 201–202 (AS).

Belongs to the triosephosphate isomerase family. Homotetramer; dimer of dimers.

The protein resides in the cytoplasm. It catalyses the reaction D-glyceraldehyde 3-phosphate = dihydroxyacetone phosphate. The protein operates within carbohydrate biosynthesis; gluconeogenesis. It participates in carbohydrate degradation; glycolysis; D-glyceraldehyde 3-phosphate from glycerone phosphate: step 1/1. In terms of biological role, involved in the gluconeogenesis. Catalyzes stereospecifically the conversion of dihydroxyacetone phosphate (DHAP) to D-glyceraldehyde-3-phosphate (G3P). This is Triosephosphate isomerase from Sulfolobus acidocaldarius (strain ATCC 33909 / DSM 639 / JCM 8929 / NBRC 15157 / NCIMB 11770).